The chain runs to 1247 residues: Lon protease homolog 2, peroxisomal (1247 aa).

Residues leucine 22–isoleucine 402 form the Lon N-terminal domain. Disordered regions lie at residues serine 76–histidine 103, threonine 447–aspartate 503, and aspartate 626–serine 655. Positions proline 459–glycine 477 are enriched in low complexity. Positions aspartate 626–lysine 639 are enriched in basic and acidic residues. Glycine 721–threonine 728 is a binding site for ATP. Positions threonine 989 to glutamate 1230 constitute a Lon proteolytic domain. Catalysis depends on residues serine 1099 and lysine 1142.

The protein belongs to the peptidase S16 family.

The protein resides in the peroxisome matrix. The catalysed reaction is Hydrolysis of proteins in presence of ATP.. ATP-dependent serine protease that mediates the selective degradation of misfolded and unassembled polypeptides in the peroxisomal matrix. Necessary for type 2 peroxisome targeting signal (PTS2)-containing protein processing and facilitates peroxisome matrix protein import. This is Lon protease homolog 2, peroxisomal from Candida dubliniensis (strain CD36 / ATCC MYA-646 / CBS 7987 / NCPF 3949 / NRRL Y-17841) (Yeast).